Consider the following 439-residue polypeptide: Xaa-Pro dipeptidase (439 aa).

Residues Asp244, Asp255, His335, Glu380, and Glu419 each coordinate Mn(2+).

Belongs to the peptidase M24B family. Bacterial-type prolidase subfamily. Mn(2+) is required as a cofactor.

It catalyses the reaction Xaa-L-Pro dipeptide + H2O = an L-alpha-amino acid + L-proline. Splits dipeptides with a prolyl residue in the C-terminal position. The polypeptide is Xaa-Pro dipeptidase (Shewanella oneidensis (strain ATCC 700550 / JCM 31522 / CIP 106686 / LMG 19005 / NCIMB 14063 / MR-1)).